The primary structure comprises 433 residues: Glutamate-1-semialdehyde 2,1-aminomutase (433 aa).

Residue K271 is modified to N6-(pyridoxal phosphate)lysine.

The protein belongs to the class-III pyridoxal-phosphate-dependent aminotransferase family. HemL subfamily. Homodimer. Requires pyridoxal 5'-phosphate as cofactor.

Its subcellular location is the cytoplasm. It carries out the reaction (S)-4-amino-5-oxopentanoate = 5-aminolevulinate. Its pathway is porphyrin-containing compound metabolism; protoporphyrin-IX biosynthesis; 5-aminolevulinate from L-glutamyl-tRNA(Glu): step 2/2. It functions in the pathway porphyrin-containing compound metabolism; chlorophyll biosynthesis. The protein is Glutamate-1-semialdehyde 2,1-aminomutase of Prochlorococcus marinus (strain MIT 9301).